Here is a 354-residue protein sequence, read N- to C-terminus: NADH-quinone oxidoreductase subunit H (354 aa).

8 helical membrane-spanning segments follow: residues 25 to 45 (LVRILVVAVVILLCVAYLILW), 91 to 111 (WVYLVAPVMVVVPAFAVWAVI), 126 to 146 (LLYAISISSVGVYGVILAGWA), 170 to 190 (MGFALVVVMMTAGTMNLSDIV), 205 to 225 (FLSWNWLPLLPAFVVYFVSGI), 257 to 277 (LFFLAEYINMIVISALASILF), 290 to 310 (FIPGIVWLVLKVFLLLSVFIW), and 330 to 350 (VFLPVTVIWVVVVGFWIMSPL).

Belongs to the complex I subunit 1 family. As to quaternary structure, NDH-1 is composed of 14 different subunits. Subunits NuoA, H, J, K, L, M, N constitute the membrane sector of the complex.

Its subcellular location is the cell inner membrane. The catalysed reaction is a quinone + NADH + 5 H(+)(in) = a quinol + NAD(+) + 4 H(+)(out). In terms of biological role, NDH-1 shuttles electrons from NADH, via FMN and iron-sulfur (Fe-S) centers, to quinones in the respiratory chain. The immediate electron acceptor for the enzyme in this species is believed to be ubiquinone. Couples the redox reaction to proton translocation (for every two electrons transferred, four hydrogen ions are translocated across the cytoplasmic membrane), and thus conserves the redox energy in a proton gradient. This subunit may bind ubiquinone. The polypeptide is NADH-quinone oxidoreductase subunit H (Paraburkholderia phymatum (strain DSM 17167 / CIP 108236 / LMG 21445 / STM815) (Burkholderia phymatum)).